We begin with the raw amino-acid sequence, 290 residues long: uncharacterized protein (290 aa).

The segment at 153 to 178 (EMVPITTSSTTPRSKGDEATSTGAFP) is disordered. The segment covering 157–178 (ITTSSTTPRSKGDEATSTGAFP) has biased composition (polar residues). A helical membrane pass occupies residues 202–222 (LIAVTLLLGGAAIIVFVIFEV). The segment at 246–276 (KEEDQKPGTTESQLDSQPEKVKHNVPNSSDS) is disordered. The span at 252–261 (PGTTESQLDS) shows a compositional bias: polar residues.

The protein resides in the membrane. This is an uncharacterized protein from Mus musculus (Mouse).